The primary structure comprises 711 residues: MKYLILAEKPSVARDIADALQINQKRNGYFENNQYIVTWALGHLVTNATPEQYDKNLKEWRLEDLPIIPKYMKTVVIGKTSKQFKTVKALILDNKVKDIIIATDAGREGELVARLILDKVGNKKPLRRLWISSVTKKAIQQSFKNLKDGRQYNDLYYAALARSEADWIVGINATRALTTKYDAQLSLGRVQTPTIQLVNTRQQEINQFKPQQYYTLSLTVKGFDFQLESNQRYTNKETLEQIVNNLKNVDGKIKSVATKHKKSYPQSLYNLTDLQQDMYRRYKIGPKETLNTLQSLYERHKVVTYPRTDSNYLTTDMVDTMKERIQATMATTYKDQARPLISKTFSSKMSIFNNQKVSDHHAIIPTEVRPVMSDLSNRELKLYDMIVERFLEALMPPHEYDAITVTLEVAGHTFVLKENVTTVLGFKSIRQGESITEMQQPFSEGDEVKISKTNIREHETTPPEYFNEGSLLKAMENPQNFIQLKDKKYAQTLKQTGGIGTVATRADIIDKLFNMNAIESRDGKIKVTSKGKQILELAPEELTSPLLTAQWEEKLLLIERGKYQAKTFINEMKGFTKDVVNGIKNSDRKYKHDNLTTTECPTCGKFMIKVKTKNGQMLVCQDPSCKTKKNVQRKTNARCPNCKKKLTLFGKGKEAVYRCVCGHSETQAHMDQRMKSKSSGKVSRKEMKKYMNKNEGLDNNPFKDALKNLNL.

The region spanning K2–T135 is the Toprim domain. E8 and D104 together coordinate Mg(2+). Residues Y152–V580 enclose the Topo IA-type catalytic domain. The segment at S186–Q191 is interaction with DNA. The O-(5'-phospho-DNA)-tyrosine intermediate role is filled by Y305. The tract at residues M691 to L711 is disordered.

This sequence belongs to the type IA topoisomerase family. Mg(2+) is required as a cofactor.

It carries out the reaction ATP-independent breakage of single-stranded DNA, followed by passage and rejoining.. In terms of biological role, releases the supercoiling and torsional tension of DNA, which is introduced during the DNA replication and transcription, by transiently cleaving and rejoining one strand of the DNA duplex. Introduces a single-strand break via transesterification at a target site in duplex DNA. The scissile phosphodiester is attacked by the catalytic tyrosine of the enzyme, resulting in the formation of a DNA-(5'-phosphotyrosyl)-enzyme intermediate and the expulsion of a 3'-OH DNA strand. The free DNA strand then undergoes passage around the unbroken strand, thus removing DNA supercoils. Finally, in the religation step, the DNA 3'-OH attacks the covalent intermediate to expel the active-site tyrosine and restore the DNA phosphodiester backbone. The chain is Putative DNA topoisomerase 3 from Staphylococcus aureus (strain bovine RF122 / ET3-1).